We begin with the raw amino-acid sequence, 253 residues long: Putative ankyrin repeat protein NMB1133/NMB1171 (253 aa).

2 ANK repeats span residues 196–225 (DGYTPLHHEAIAGNALMVQAMLEYGANPAS) and 229–252 (EGYTALDFACLTGWQNVADLLEPR).

The polypeptide is Putative ankyrin repeat protein NMB1133/NMB1171 (Neisseria meningitidis serogroup B (strain ATCC BAA-335 / MC58)).